The sequence spans 733 residues: Protein ROG3 (733 aa).

The PY-motif signature appears at 460 to 463 (PPNY). Positions 518–566 (RDNLGLPPSASSAAASRSLSPLLNVPAPEDGTERILPQSALGPNSGSVP) are disordered. Positions 523–540 (LPPSASSAAASRSLSPLL) are enriched in low complexity. The PY-motif motif lies at 625–628 (PPSY). Disordered stretches follow at residues 636-658 (QPRK…SIPT) and 693-733 (ELTS…GNKR). A compositionally biased stretch (low complexity) spans 646–658 (RNSSTTLSSSIPT).

This sequence belongs to the arrestin family. Interacts with RSP5 via its 2 PY-motifs.

Functionally, involved in resistance to GST substrate o-dinitrobenzene (o-DNB). This chain is Protein ROG3 (ROG3), found in Saccharomyces cerevisiae (strain ATCC 204508 / S288c) (Baker's yeast).